The following is a 409-amino-acid chain: Ribose-phosphate pyrophosphokinase 3, chloroplastic (409 aa).

Composition is skewed to low complexity over residues 1-16 (MATA…PAAA) and 34-43 (PASAFARPSP). A disordered region spans residues 1–43 (MATAASASASASPAAAFGAKTRRPGPSPSPSPSPASAFARPSP). Residues 1–44 (MATAASASASASPAAAFGAKTRRPGPSPSPSPSPASAFARPSPR) constitute a chloroplast transit peptide. Positions 229 and 231 each coordinate Mg(2+). Residues 312–327 (GRHVVIVDDLVQSGGT) are binding of phosphoribosylpyrophosphate.

This sequence belongs to the ribose-phosphate pyrophosphokinase family. The cofactor is Mg(2+).

The protein localises to the plastid. It is found in the chloroplast. The catalysed reaction is D-ribose 5-phosphate + ATP = 5-phospho-alpha-D-ribose 1-diphosphate + AMP + H(+). This is Ribose-phosphate pyrophosphokinase 3, chloroplastic from Oryza sativa subsp. japonica (Rice).